Consider the following 442-residue polypeptide: MNIRVQDYFDHPYIYVDPRETKPFESYTNEQVENIRLLSVTADPTQMARPFGSATYRIQKYPGDLDLQEEFFDCCTMEHVVKKFAKKLQDVVKRINKSKLHYFSEFKAGVDSRYDINIGKIKDGIYTPSLNLTDKIKRLYGKGLLNDKEHETLMRALSNEVLGGDEYDVVNYTLRERKVLRWTDEEVLKGQKKLPKNKIISLSNALKAKSNVKIDMIAYVNDQFVEVTNFYILILINPDSGTLDTINFDFDYLDDQVLGKQYDIQIKDEVQKLYYSNMYYSPFKMVKRMWAYSRSFRMMDDVNTLLPIVGGNISLLYQIVSELNTILRLYEVGKSTPEKTINKRLERLAYNLANVVELDKEMLVNITAVIDSLETYRGQQKAIQMKQFVIKPLKNFINGLTIIKLNQIGYNPPPERFLPYPLKYGAITRIPFEDVQNPLNKY.

This is an uncharacterized protein from Sputnik virophage.